The sequence spans 31 residues: Hemocyanin subunit 2 (31 aa).

It belongs to the tyrosinase family. Hemocyanin subfamily. As to expression, hemolymph.

The protein localises to the secreted. It localises to the extracellular space. In terms of biological role, hemocyanins are copper-containing oxygen carriers occurring freely dissolved in the hemolymph of many mollusks and arthropods. In Maja squinado (Mediterranean spider crab), this protein is Hemocyanin subunit 2.